We begin with the raw amino-acid sequence, 304 residues long: Acetylglutamate kinase (304 aa).

Substrate-binding positions include 82 to 83 (GG), R104, and N197.

This sequence belongs to the acetylglutamate kinase family. ArgB subfamily.

The protein localises to the cytoplasm. The enzyme catalyses N-acetyl-L-glutamate + ATP = N-acetyl-L-glutamyl 5-phosphate + ADP. It functions in the pathway amino-acid biosynthesis; L-arginine biosynthesis; N(2)-acetyl-L-ornithine from L-glutamate: step 2/4. Its function is as follows. Catalyzes the ATP-dependent phosphorylation of N-acetyl-L-glutamate. This is Acetylglutamate kinase from Prochlorococcus marinus (strain SARG / CCMP1375 / SS120).